A 302-amino-acid polypeptide reads, in one-letter code: Thioredoxin-like protein CDSP32, chloroplastic (302 aa).

A chloroplast-targeting transit peptide spans M1–K56. The 136-residue stretch at H163 to V298 folds into the Thioredoxin domain. Residues C219 and C222 each act as nucleophile in the active site. C219 and C222 form a disulfide bridge.

It belongs to the thioredoxin family. Interacts with the plastidial peroxiredoxin BAS1.

It localises to the plastid. It is found in the chloroplast stroma. Its function is as follows. Probable thiol-disulfide oxidoreductase involved in resistance to oxidative stress. May participate in the reduction of alkyl hydroperoxides derived from oxidative stress by acting as a physiological electron donor to the BAS1 peroxiredoxin. May regenerate methionine sulfoxide reductase B1 (MSRB1) activity through sulfenic acid reduction. This Arabidopsis thaliana (Mouse-ear cress) protein is Thioredoxin-like protein CDSP32, chloroplastic (CDSP32).